Reading from the N-terminus, the 468-residue chain is ATP synthase subunit beta (468 aa).

155–162 (GGAGVGKT) contributes to the ATP binding site.

Belongs to the ATPase alpha/beta chains family. As to quaternary structure, F-type ATPases have 2 components, CF(1) - the catalytic core - and CF(0) - the membrane proton channel. CF(1) has five subunits: alpha(3), beta(3), gamma(1), delta(1), epsilon(1). CF(0) has three main subunits: a(1), b(2) and c(9-12). The alpha and beta chains form an alternating ring which encloses part of the gamma chain. CF(1) is attached to CF(0) by a central stalk formed by the gamma and epsilon chains, while a peripheral stalk is formed by the delta and b chains.

The protein resides in the cell membrane. The catalysed reaction is ATP + H2O + 4 H(+)(in) = ADP + phosphate + 5 H(+)(out). In terms of biological role, produces ATP from ADP in the presence of a proton gradient across the membrane. The catalytic sites are hosted primarily by the beta subunits. In Streptococcus pneumoniae (strain ATCC BAA-255 / R6), this protein is ATP synthase subunit beta.